The following is a 122-amino-acid chain: Basic phospholipase A2 F16 (122 aa).

Disulfide bonds link cysteine 26–cysteine 115, cysteine 28–cysteine 44, cysteine 43–cysteine 95, cysteine 49–cysteine 122, cysteine 50–cysteine 88, cysteine 57–cysteine 81, and cysteine 75–cysteine 86. Ca(2+)-binding residues include tyrosine 27, glycine 29, and glycine 31. Histidine 47 is a catalytic residue. Residue aspartate 48 participates in Ca(2+) binding. Aspartate 89 is a catalytic residue.

The protein belongs to the phospholipase A2 family. Group II subfamily. D49 sub-subfamily. Ca(2+) is required as a cofactor. As to expression, expressed by the venom gland.

It localises to the secreted. The enzyme catalyses a 1,2-diacyl-sn-glycero-3-phosphocholine + H2O = a 1-acyl-sn-glycero-3-phosphocholine + a fatty acid + H(+). Pre-incubation with heparin markedly reduces the neurotoxicity of this toxin. Snake venom phospholipase A2 (PLA2) that produces neuromuscular blockade in chick biventer cervicis preparations in the absence and presence of crotapotin. In contrast, in mouse phrenic nerve-diaphragm preparations, the neuromuscular blockade is dependent on crotapotin. PLA2 catalyzes the calcium-dependent hydrolysis of the 2-acyl groups in 3-sn-phosphoglycerides. The sequence is that of Basic phospholipase A2 F16 from Crotalus durissus terrificus (South American rattlesnake).